A 367-amino-acid chain; its full sequence is Anhydro-N-acetylmuramic acid kinase (367 aa).

10–17 (GTSLDGVD) contacts ATP.

This sequence belongs to the anhydro-N-acetylmuramic acid kinase family.

It catalyses the reaction 1,6-anhydro-N-acetyl-beta-muramate + ATP + H2O = N-acetyl-D-muramate 6-phosphate + ADP + H(+). Its pathway is amino-sugar metabolism; 1,6-anhydro-N-acetylmuramate degradation. It participates in cell wall biogenesis; peptidoglycan recycling. Functionally, catalyzes the specific phosphorylation of 1,6-anhydro-N-acetylmuramic acid (anhMurNAc) with the simultaneous cleavage of the 1,6-anhydro ring, generating MurNAc-6-P. Is required for the utilization of anhMurNAc either imported from the medium or derived from its own cell wall murein, and thus plays a role in cell wall recycling. The chain is Anhydro-N-acetylmuramic acid kinase from Aliivibrio fischeri (strain ATCC 700601 / ES114) (Vibrio fischeri).